The chain runs to 247 residues: Phosphoribosylaminoimidazole-succinocarboxamide synthase (247 aa).

It belongs to the SAICAR synthetase family.

It carries out the reaction 5-amino-1-(5-phospho-D-ribosyl)imidazole-4-carboxylate + L-aspartate + ATP = (2S)-2-[5-amino-1-(5-phospho-beta-D-ribosyl)imidazole-4-carboxamido]succinate + ADP + phosphate + 2 H(+). The protein operates within purine metabolism; IMP biosynthesis via de novo pathway; 5-amino-1-(5-phospho-D-ribosyl)imidazole-4-carboxamide from 5-amino-1-(5-phospho-D-ribosyl)imidazole-4-carboxylate: step 1/2. This is Phosphoribosylaminoimidazole-succinocarboxamide synthase from Methanopyrus kandleri (strain AV19 / DSM 6324 / JCM 9639 / NBRC 100938).